The following is a 443-amino-acid chain: Thymidine phosphorylase (443 aa).

This sequence belongs to the thymidine/pyrimidine-nucleoside phosphorylase family. As to quaternary structure, homodimer.

It catalyses the reaction thymidine + phosphate = 2-deoxy-alpha-D-ribose 1-phosphate + thymine. Its pathway is pyrimidine metabolism; dTMP biosynthesis via salvage pathway; dTMP from thymine: step 1/2. In terms of biological role, the enzymes which catalyze the reversible phosphorolysis of pyrimidine nucleosides are involved in the degradation of these compounds and in their utilization as carbon and energy sources, or in the rescue of pyrimidine bases for nucleotide synthesis. The chain is Thymidine phosphorylase from Shewanella sediminis (strain HAW-EB3).